The primary structure comprises 261 residues: NAD kinase (261 aa).

Asp54 serves as the catalytic Proton acceptor. NAD(+) is bound by residues 54–55, 123–124, Arg150, Asp152, and 163–168; these read DG, ND, and TAYSLS.

It belongs to the NAD kinase family. The cofactor is a divalent metal cation.

The protein localises to the cytoplasm. It catalyses the reaction NAD(+) + ATP = ADP + NADP(+) + H(+). Functionally, involved in the regulation of the intracellular balance of NAD and NADP, and is a key enzyme in the biosynthesis of NADP. Catalyzes specifically the phosphorylation on 2'-hydroxyl of the adenosine moiety of NAD to yield NADP. The polypeptide is NAD kinase (Caldicellulosiruptor bescii (strain ATCC BAA-1888 / DSM 6725 / KCTC 15123 / Z-1320) (Anaerocellum thermophilum)).